Reading from the N-terminus, the 941-residue chain is Protocadherin alpha-12 (941 aa).

The N-terminal stretch at 1–29 (MVIIGPRGPGSQRLLLSLLLLAAWEVGSG) is a signal peptide. Cadherin domains follow at residues 30–133 (QLHY…PPVF), 134–242 (RERE…GPAF), 243–350 (DKPS…VPEV), 351–455 (MVTS…APAF), 456–565 (AQPE…APAL), and 581–678 (VPRS…APKT). Residues 30–697 (QLHYSVYEEA…DPEAALVDIN (668 aa)) are Extracellular-facing. Residues N257 and N265 are each glycosylated (N-linked (GlcNAc...) asparagine). Residue N548 is glycosylated (N-linked (GlcNAc...) asparagine). A helical membrane pass occupies residues 698–718 (VYLIIAICAVSSLLVLTLLLY). Residues 719–941 (TALRCSAPPT…GNSTTDNSDQ (223 aa)) are Cytoplasmic-facing. 5 PXXP repeats span residues 734–737 (PGKP), 790–793 (PRQP), 823–826 (PGGP), 863–866 (GPGN), and 882–885 (PGSP). Residues 734–885 (PGKPTLVCSS…PDKFIIPGSP (152 aa)) form a 5 X 4 AA repeats of P-X-X-P region. The segment at 818–941 (ILRAGPGGPD…GNSTTDNSDQ (124 aa)) is disordered. A compositionally biased stretch (basic and acidic residues) spans 900-914 (DKSDFITFGKKEETK).

The protein resides in the cell membrane. In terms of biological role, potential calcium-dependent cell-adhesion protein. May be involved in the establishment and maintenance of specific neuronal connections in the brain. This is Protocadherin alpha-12 (PCDHA12) from Homo sapiens (Human).